A 164-amino-acid chain; its full sequence is UPF0304 protein YfbU (164 aa).

Belongs to the UPF0304 family.

This chain is UPF0304 protein YfbU, found in Escherichia coli O139:H28 (strain E24377A / ETEC).